We begin with the raw amino-acid sequence, 150 residues long: MKVQVKILDQRLGQEWPLPSYATTGSAGLDLRACLDEAIQIEPGQTVLIKTGMAIYIHDTNFAGLILPRSGLGHKHGIVLGNLVGLIDSDYQGELMISVWNRGQNTFTLEPGERLAQYVLVPVIQAEFEQVEEFVATDRGAGGFGHTGQK.

Substrate-binding positions include Arg69–Gly71, Asn82, Leu86–Asp88, and Met96.

It belongs to the dUTPase family. Mg(2+) serves as cofactor.

It catalyses the reaction dUTP + H2O = dUMP + diphosphate + H(+). It participates in pyrimidine metabolism; dUMP biosynthesis; dUMP from dCTP (dUTP route): step 2/2. Its function is as follows. This enzyme is involved in nucleotide metabolism: it produces dUMP, the immediate precursor of thymidine nucleotides and it decreases the intracellular concentration of dUTP so that uracil cannot be incorporated into DNA. The chain is Deoxyuridine 5'-triphosphate nucleotidohydrolase from Acinetobacter baylyi (strain ATCC 33305 / BD413 / ADP1).